A 255-amino-acid polypeptide reads, in one-letter code: MPLELVTVPCLSDNYAFLVHDAASGETAVVDVPEAGPVMAALAERNWRLTQILLTHHHGDHVAGVAALREATGARVAGAAADAHRLPPLDLALAEGDRVRIGSEDGTVLEVPGHTVGHIAFHFADSGLAFTGDSLMAMGCGRLFEGTPRMMWQSLRKLSALPADTLICSGHEYTQANARFACTLEPENPVLIFRVGSIAAARKEGRPTVPSQLSDEIATNPFLRAGEAALKAAVGMADAEDAEVFAEIRRRKDNF.

H56, H58, D60, H61, H114, D133, and H171 together coordinate Zn(2+).

This sequence belongs to the metallo-beta-lactamase superfamily. Glyoxalase II family. In terms of assembly, monomer. The cofactor is Zn(2+).

It carries out the reaction an S-(2-hydroxyacyl)glutathione + H2O = a 2-hydroxy carboxylate + glutathione + H(+). It participates in secondary metabolite metabolism; methylglyoxal degradation; (R)-lactate from methylglyoxal: step 2/2. Thiolesterase that catalyzes the hydrolysis of S-D-lactoyl-glutathione to form glutathione and D-lactic acid. The sequence is that of Hydroxyacylglutathione hydrolase from Cereibacter sphaeroides (strain ATCC 17025 / ATH 2.4.3) (Rhodobacter sphaeroides).